The chain runs to 241 residues: Putative ABC transporter ATP-binding protein CA_C0773 (241 aa).

In terms of domain architecture, ABC transporter spans 2-241 (IKLEKVSFTY…REFLMECNII (240 aa)). 34–41 (GPNGSGKS) serves as a coordination point for ATP.

It belongs to the ABC transporter superfamily.

The protein resides in the cell membrane. Its function is as follows. Probably part of an ABC transporter complex. Responsible for energy coupling to the transport system. The chain is Putative ABC transporter ATP-binding protein CA_C0773 from Clostridium acetobutylicum (strain ATCC 824 / DSM 792 / JCM 1419 / IAM 19013 / LMG 5710 / NBRC 13948 / NRRL B-527 / VKM B-1787 / 2291 / W).